The primary structure comprises 287 residues: Pyridoxal kinase PdxY (287 aa).

Substrate is bound by residues Ser-10 and 45-46 (TQ). ATP is bound by residues Asp-112, Ala-144, Glu-149, Lys-182, and 209–212 (RPLV). Asp-224 contributes to the substrate binding site.

The protein belongs to the pyridoxine kinase family. PdxY subfamily. Homodimer. Mg(2+) is required as a cofactor.

The catalysed reaction is pyridoxal + ATP = pyridoxal 5'-phosphate + ADP + H(+). It functions in the pathway cofactor metabolism; pyridoxal 5'-phosphate salvage; pyridoxal 5'-phosphate from pyridoxal: step 1/1. Functionally, pyridoxal kinase involved in the salvage pathway of pyridoxal 5'-phosphate (PLP). Catalyzes the phosphorylation of pyridoxal to PLP. This is Pyridoxal kinase PdxY from Escherichia coli O6:H1 (strain CFT073 / ATCC 700928 / UPEC).